The chain runs to 522 residues: Protein nucleotidyltransferase YdiU (522 aa).

ATP is bound by residues G109, G111, R112, K132, D144, G145, R195, and R202. The active-site Proton acceptor is the D271. 2 residues coordinate Mg(2+): N272 and D281. Residue D281 participates in ATP binding.

Belongs to the SELO family. The cofactor is Mg(2+). It depends on Mn(2+) as a cofactor.

The catalysed reaction is L-seryl-[protein] + ATP = 3-O-(5'-adenylyl)-L-seryl-[protein] + diphosphate. The enzyme catalyses L-threonyl-[protein] + ATP = 3-O-(5'-adenylyl)-L-threonyl-[protein] + diphosphate. It catalyses the reaction L-tyrosyl-[protein] + ATP = O-(5'-adenylyl)-L-tyrosyl-[protein] + diphosphate. It carries out the reaction L-histidyl-[protein] + UTP = N(tele)-(5'-uridylyl)-L-histidyl-[protein] + diphosphate. The catalysed reaction is L-seryl-[protein] + UTP = O-(5'-uridylyl)-L-seryl-[protein] + diphosphate. The enzyme catalyses L-tyrosyl-[protein] + UTP = O-(5'-uridylyl)-L-tyrosyl-[protein] + diphosphate. Its function is as follows. Nucleotidyltransferase involved in the post-translational modification of proteins. It can catalyze the addition of adenosine monophosphate (AMP) or uridine monophosphate (UMP) to a protein, resulting in modifications known as AMPylation and UMPylation. The chain is Protein nucleotidyltransferase YdiU from Burkholderia ambifaria (strain MC40-6).